Consider the following 183-residue polypeptide: NADH-quinone oxidoreductase subunit A (183 aa).

Transmembrane regions (helical) follow at residues 11–31, 63–83, and 98–118; these read IIAF…VPLL, FYLV…LYAW, and VVIF…VGAL. The segment at 159–183 is disordered; the sequence is TGQIPAQSSGRVKSKTTPALSSEKE.

Belongs to the complex I subunit 3 family. As to quaternary structure, NDH-1 is composed of 14 different subunits. Subunits NuoA, H, J, K, L, M, N constitute the membrane sector of the complex.

It is found in the cell inner membrane. It carries out the reaction a quinone + NADH + 5 H(+)(in) = a quinol + NAD(+) + 4 H(+)(out). NDH-1 shuttles electrons from NADH, via FMN and iron-sulfur (Fe-S) centers, to quinones in the respiratory chain. The immediate electron acceptor for the enzyme in this species is believed to be ubiquinone. Couples the redox reaction to proton translocation (for every two electrons transferred, four hydrogen ions are translocated across the cytoplasmic membrane), and thus conserves the redox energy in a proton gradient. This Acinetobacter baumannii (strain ACICU) protein is NADH-quinone oxidoreductase subunit A.